Consider the following 423-residue polypeptide: MISRKIISTINSKTFYNKSLSYCTVNNNKNTTININNNNEKPKIKTGILMLNLGGPSKLEEVEPFLTRLFTDKEIFKLPFQKYTGTLIAKRRSNAVMKLYEAIGGGSPIRKWTEKQGELLSSMMDKISPETAPHKHYIGFRYSDPLIADTLDQMENDNVERVVAFSQYPQYSCTTTGSSLNNLWKTLEEKQMQSKFKWSVIDRWQDHKGFIDATIHKIKKAYNQFNSKLRELDIDDVDANNNNNNNKPVLVFSAHSLPMSTVEKGDPYPQEVAETVCRVMDGLGIRDEETGKPLEYILAWQSKVGPLPWLSPKTSFVIEQLAKKGRNAIVIPIAFTSDHIETLSEIDIELQHLAKKCGMKLLVRSESLNDDPLIISAMADLVNTHLKSNKTIHSNQYHLKCPGCKDDSTFCRTISNPIQALKL.

The N-terminal 29 residues, 1-29 (MISRKIISTINSKTFYNKSLSYCTVNNNK), are a transit peptide targeting the mitochondrion. Residue Cys173 coordinates [2Fe-2S] cluster. Residues His207 and Asp380 contribute to the active site. [2Fe-2S] cluster contacts are provided by Cys401, Cys404, and Cys411.

It belongs to the ferrochelatase family. In terms of assembly, monomer. [2Fe-2S] cluster is required as a cofactor.

It localises to the mitochondrion inner membrane. It carries out the reaction heme b + 2 H(+) = protoporphyrin IX + Fe(2+). It functions in the pathway porphyrin-containing compound metabolism; protoheme biosynthesis; protoheme from protoporphyrin-IX: step 1/1. Functionally, catalyzes the ferrous insertion into protoporphyrin IX. The protein is Ferrochelatase, mitochondrial (hemH) of Dictyostelium discoideum (Social amoeba).